The following is a 311-amino-acid chain: tRNA dimethylallyltransferase (311 aa).

Position 10–17 (10–17) interacts with ATP; it reads GPTAVGKS. 12–17 is a binding site for substrate; the sequence is TAVGKS. Residues 35 to 38 are interaction with substrate tRNA; sequence DSMQ.

The protein belongs to the IPP transferase family. In terms of assembly, monomer. Requires Mg(2+) as cofactor.

It catalyses the reaction adenosine(37) in tRNA + dimethylallyl diphosphate = N(6)-dimethylallyladenosine(37) in tRNA + diphosphate. Its function is as follows. Catalyzes the transfer of a dimethylallyl group onto the adenine at position 37 in tRNAs that read codons beginning with uridine, leading to the formation of N6-(dimethylallyl)adenosine (i(6)A). In Carboxydothermus hydrogenoformans (strain ATCC BAA-161 / DSM 6008 / Z-2901), this protein is tRNA dimethylallyltransferase.